The following is a 400-amino-acid chain: uncharacterized protein (400 aa).

This is an uncharacterized protein from Saccharomyces cerevisiae (strain ATCC 204508 / S288c) (Baker's yeast).